Reading from the N-terminus, the 497-residue chain is Catalase-2 (497 aa).

Residues His71 and Asn144 contribute to the active site. Residue Tyr354 coordinates heme.

This sequence belongs to the catalase family. It depends on heme as a cofactor.

It catalyses the reaction 2 H2O2 = O2 + 2 H2O. Functionally, catalase involved in the oxidative stress response serving to protect cells from toxicity. For instance plays a role in defending against oxidative damage induced by excessive copper stress. Not required for maintaining normal lifespan. The chain is Catalase-2 from Caenorhabditis elegans.